The primary structure comprises 424 residues: Glutamate-1-semialdehyde 2,1-aminomutase (424 aa).

An N6-(pyridoxal phosphate)lysine modification is found at Lys-266.

It belongs to the class-III pyridoxal-phosphate-dependent aminotransferase family. HemL subfamily. In terms of assembly, homodimer. Requires pyridoxal 5'-phosphate as cofactor.

The protein resides in the cytoplasm. The enzyme catalyses (S)-4-amino-5-oxopentanoate = 5-aminolevulinate. It participates in porphyrin-containing compound metabolism; protoporphyrin-IX biosynthesis; 5-aminolevulinate from L-glutamyl-tRNA(Glu): step 2/2. In Azoarcus sp. (strain BH72), this protein is Glutamate-1-semialdehyde 2,1-aminomutase.